The following is a 309-amino-acid chain: Large ribosomal subunit protein mL45 (309 aa).

It belongs to the mitochondrion-specific ribosomal protein mL45 family. In terms of assembly, component of the mitochondrial ribosome large subunit (39S) which comprises a 16S rRNA and about 50 distinct proteins.

The protein localises to the mitochondrion. Functionally, component of the mitochondrial large ribosomal subunit (mt-LSU). Within the mitochondrial ribosomes, required to direct the nascent polypeptide toward the tunnel exit and position the exit at a distance from the membrane surface. The sequence is that of Large ribosomal subunit protein mL45 (mrpl45) from Xenopus tropicalis (Western clawed frog).